The chain runs to 255 residues: 1-(5-phosphoribosyl)-5-[(5-phosphoribosylamino)methylideneamino] imidazole-4-carboxamide isomerase (255 aa).

The Proton acceptor role is filled by aspartate 8. The Proton donor role is filled by aspartate 129.

Belongs to the HisA/HisF family.

The protein resides in the cytoplasm. The enzyme catalyses 1-(5-phospho-beta-D-ribosyl)-5-[(5-phospho-beta-D-ribosylamino)methylideneamino]imidazole-4-carboxamide = 5-[(5-phospho-1-deoxy-D-ribulos-1-ylimino)methylamino]-1-(5-phospho-beta-D-ribosyl)imidazole-4-carboxamide. The protein operates within amino-acid biosynthesis; L-histidine biosynthesis; L-histidine from 5-phospho-alpha-D-ribose 1-diphosphate: step 4/9. This is 1-(5-phosphoribosyl)-5-[(5-phosphoribosylamino)methylideneamino] imidazole-4-carboxamide isomerase from Prochlorococcus marinus (strain MIT 9312).